A 492-amino-acid chain; its full sequence is 3-octaprenyl-4-hydroxybenzoate carboxy-lyase (492 aa).

Position 177 (asparagine 177) interacts with Mn(2+). Prenylated FMN contacts are provided by residues 180 to 182 (IYR), 194 to 196 (RWL), and 199 to 200 (RG). Position 243 (glutamate 243) interacts with Mn(2+). Residue aspartate 292 is the Proton donor of the active site.

Belongs to the UbiD family. As to quaternary structure, homohexamer. Prenylated FMN is required as a cofactor. The cofactor is Mn(2+).

It is found in the cell membrane. The catalysed reaction is a 4-hydroxy-3-(all-trans-polyprenyl)benzoate + H(+) = a 2-(all-trans-polyprenyl)phenol + CO2. It participates in cofactor biosynthesis; ubiquinone biosynthesis. Catalyzes the decarboxylation of 3-octaprenyl-4-hydroxy benzoate to 2-octaprenylphenol, an intermediate step in ubiquinone biosynthesis. This is 3-octaprenyl-4-hydroxybenzoate carboxy-lyase from Neisseria meningitidis serogroup C / serotype 2a (strain ATCC 700532 / DSM 15464 / FAM18).